Reading from the N-terminus, the 307-residue chain is Peroxisomal membrane protein PMP34 (307 aa).

Topologically, residues 1 to 9 (MASVLSYES) are cytoplasmic. Residues 1-147 (MASVLSYESL…NEDIIPTNYK (147 aa)) are necessary for targeting to peroxisomes and interaction with PEX19. Solcar repeat units follow at residues 7-92 (YESL…LKAV), 99-192 (SSTG…LKRQ), and 200-294 (LSSL…LTAA). The helical transmembrane segment at 10 to 30 (LVHAVAGAVGSVTAMTVFFPL) threads the bilayer. The Lumenal portion of the chain corresponds to 31 to 66 (DTARLRLQVDEKRKSKTTHAVLLEIIKEEGLLAPYR). A helical membrane pass occupies residues 67–87 (GWFPVISSLCCSNFVYFYTFN). Topologically, residues 88-104 (SLKAVWVKGQRSSTGKD) are cytoplasmic. The helical transmembrane segment at 105-125 (LVVGFVAGVVNVLLTTPLWVV) threads the bilayer. At 126–160 (NTRLKLQGAKFRNEDIIPTNYKGIIDAFHQIIRDE) the chain is on the lumenal side. The helical transmembrane segment at 161-181 (GILALWNGTFPSLLLVFNPAI) threads the bilayer. At 182-202 (QFMFYEGLKRQLLKKRMKLSS) the chain is on the cytoplasmic side. Residues 190 to 199 (KRQLLKKRMK) carry the Peroxisome localization signal motif. A helical membrane pass occupies residues 203–223 (LDVFIIGAIAKAIATTVTYPM). The Lumenal segment spans residues 224-280 (QTVQSILRFGRHRLNPENRTLGSLRNVLSLLHQRVKRFGIMGLYKGLEAKLLQTVLT). A necessary for targeting to peroxisomes and interaction with PEX19 region spans residues 244–307 (LGSLRNVLSL…VMGLKSTHKH (64 aa)). The helical transmembrane segment at 281–301 (AALMFLVYEKLTAATFTVMGL) threads the bilayer. At 302–307 (KSTHKH) the chain is on the cytoplasmic side.

It belongs to the mitochondrial carrier (TC 2.A.29) family. In terms of assembly, interacts (via N- and C-terminus peroxisomal targeting regions) with PEX19; the interaction occurs with the newly synthesized SLC25A17 in the cytosol. In terms of tissue distribution, expressed in liver, kidney, heart, spleen, muscle and lung.

Its subcellular location is the cytoplasm. The protein resides in the peroxisome membrane. It catalyses the reaction AMP(out) + CoA(in) = AMP(in) + CoA(out). The enzyme catalyses 3'-dephospho-CoA(in) + AMP(out) = 3'-dephospho-CoA(out) + AMP(in). It carries out the reaction acetyl-CoA(in) + AMP(out) = acetyl-CoA(out) + AMP(in). The catalysed reaction is AMP(in) + NAD(+)(out) = AMP(out) + NAD(+)(in). It catalyses the reaction FAD(in) + AMP(out) = FAD(out) + AMP(in). The enzyme catalyses FMN(in) + AMP(out) = FMN(out) + AMP(in). It carries out the reaction AMP(in) + ADP(out) = AMP(out) + ADP(in). The catalysed reaction is adenosine 3',5'-bisphosphate(in) + AMP(out) = adenosine 3',5'-bisphosphate(out) + AMP(in). It catalyses the reaction FAD(in) + CoA(out) = FAD(out) + CoA(in). The enzyme catalyses FAD(in) + adenosine 3',5'-bisphosphate(out) = FAD(out) + adenosine 3',5'-bisphosphate(in). It carries out the reaction FMN(in) + CoA(out) = FMN(out) + CoA(in). The catalysed reaction is FMN(in) + adenosine 3',5'-bisphosphate(out) = FMN(out) + adenosine 3',5'-bisphosphate(in). It catalyses the reaction FAD(out) + NAD(+)(in) = FAD(in) + NAD(+)(out). The enzyme catalyses FMN(out) + NAD(+)(in) = FMN(in) + NAD(+)(out). It carries out the reaction NAD(+)(in) + CoA(out) = NAD(+)(out) + CoA(in). The catalysed reaction is adenosine 3',5'-bisphosphate(out) + NAD(+)(in) = adenosine 3',5'-bisphosphate(in) + NAD(+)(out). It catalyses the reaction FMN(out) + ADP(in) = FMN(in) + ADP(out). The enzyme catalyses FAD(out) + ADP(in) = FAD(in) + ADP(out). It carries out the reaction ADP(out) + CoA(in) = ADP(in) + CoA(out). The catalysed reaction is adenosine 3',5'-bisphosphate(in) + ADP(out) = adenosine 3',5'-bisphosphate(out) + ADP(in). Peroxisomal transporter for multiple cofactors like coenzyme A (CoA), flavin adenine dinucleotide (FAD), flavin mononucleotide (FMN) and nucleotide adenosine monophosphate (AMP), and to a lesser extent for nicotinamide adenine dinucleotide (NAD(+)), adenosine diphosphate (ADP) and adenosine 3',5'-diphosphate (PAP). May catalyze the transport of free CoA, FAD and NAD(+) from the cytosol into the peroxisomal matrix by a counter-exchange mechanism. This chain is Peroxisomal membrane protein PMP34 (Slc25a17), found in Mus musculus (Mouse).